A 327-amino-acid polypeptide reads, in one-letter code: GMP reductase (327 aa).

Cysteine 176 acts as the Thioimidate intermediate in catalysis. Position 205 to 228 (205 to 228 (IIADGGIRTHGDIAKSIRFGATMV)) interacts with NADP(+).

The protein belongs to the IMPDH/GMPR family. GuaC type 2 subfamily.

It carries out the reaction IMP + NH4(+) + NADP(+) = GMP + NADPH + 2 H(+). Catalyzes the irreversible NADPH-dependent deamination of GMP to IMP. It functions in the conversion of nucleobase, nucleoside and nucleotide derivatives of G to A nucleotides, and in maintaining the intracellular balance of A and G nucleotides. This is GMP reductase from Streptococcus equi subsp. equi (strain 4047).